The following is a 347-amino-acid chain: Purine-rich element-binding protein gamma (347 aa).

Disordered stretches follow at residues 1-34 (MERA…YPQA) and 133-169 (GHRQ…HPHS). The segment covering 9 to 24 (GGGGRGRGGKNVGGSG) has biased composition (gly residues). A DNA-binding region spans residues 51-293 (AGGAAEIQEL…GIFLKVSEVR (243 aa)). Residues 134-146 (HRQEHGHSKEQGS) show a composition bias toward basic and acidic residues. Residues Ser160, Ser163, and Ser339 each carry the phosphoserine modification.

The protein belongs to the PUR DNA-binding protein family. In terms of tissue distribution, isoform 1 is expressed in testis and glioblastoma. Isoform 2 is expressed in fetal lung.

It is found in the nucleus. In Homo sapiens (Human), this protein is Purine-rich element-binding protein gamma (PURG).